The primary structure comprises 329 residues: Coiled-coil domain-containing protein 54 (329 aa).

Residues 86-149 (NIVSSISNIQ…VTELESQNSY (64 aa)) are a coiled coil. The segment covering 178-191 (TPKGTATSPDTVIS) has biased composition (polar residues). A disordered region spans residues 178–214 (TPKGTATSPDTVISSAEPERVSSYPEPTGELKKKTTS). Phosphothreonine is present on Thr-182.

The sequence is that of Coiled-coil domain-containing protein 54 (Ccdc54) from Mus musculus (Mouse).